Consider the following 274-residue polypeptide: Orotidine 5'-phosphate decarboxylase (274 aa).

Substrate contacts are provided by residues Asp40, 62–64 (KTH), 93–102 (DRKFIDIGNT), Tyr227, and Arg245. The active-site Proton donor is the Lys95.

This sequence belongs to the OMP decarboxylase family.

The enzyme catalyses orotidine 5'-phosphate + H(+) = UMP + CO2. It participates in pyrimidine metabolism; UMP biosynthesis via de novo pathway; UMP from orotate: step 2/2. This chain is Orotidine 5'-phosphate decarboxylase (pyrG), found in Emericella nidulans (strain FGSC A4 / ATCC 38163 / CBS 112.46 / NRRL 194 / M139) (Aspergillus nidulans).